Reading from the N-terminus, the 199-residue chain is ATP-dependent Clp protease proteolytic subunit (199 aa).

S99 (nucleophile) is an active-site residue. H124 is a catalytic residue.

Belongs to the peptidase S14 family. In terms of assembly, fourteen ClpP subunits assemble into 2 heptameric rings which stack back to back to give a disk-like structure with a central cavity, resembling the structure of eukaryotic proteasomes.

It localises to the cytoplasm. The catalysed reaction is Hydrolysis of proteins to small peptides in the presence of ATP and magnesium. alpha-casein is the usual test substrate. In the absence of ATP, only oligopeptides shorter than five residues are hydrolyzed (such as succinyl-Leu-Tyr-|-NHMec, and Leu-Tyr-Leu-|-Tyr-Trp, in which cleavage of the -Tyr-|-Leu- and -Tyr-|-Trp bonds also occurs).. Functionally, cleaves peptides in various proteins in a process that requires ATP hydrolysis. Has a chymotrypsin-like activity. Plays a major role in the degradation of misfolded proteins. This is ATP-dependent Clp protease proteolytic subunit from Lactococcus lactis subsp. cremoris (strain SK11).